Consider the following 83-residue polypeptide: MSGNTGERPFADIITSIRYWVIHSITIPSLFIAGWLFVSTGLAYDVFGSPRPNEYFTESRQEVPLITGRFNSLEQVDEFTRSF.

The helical transmembrane segment at 21–35 (VIHSITIPSLFIAGW) threads the bilayer. Histidine 23 is a heme binding site.

It belongs to the PsbE/PsbF family. As to quaternary structure, heterodimer of an alpha subunit and a beta subunit. PSII is composed of 1 copy each of membrane proteins PsbA, PsbB, PsbC, PsbD, PsbE, PsbF, PsbH, PsbI, PsbJ, PsbK, PsbL, PsbM, PsbT, PsbX, PsbY, PsbZ, Psb30/Ycf12, at least 3 peripheral proteins of the oxygen-evolving complex and a large number of cofactors. It forms dimeric complexes. Requires heme b as cofactor.

Its subcellular location is the plastid. The protein resides in the chloroplast thylakoid membrane. In terms of biological role, this b-type cytochrome is tightly associated with the reaction center of photosystem II (PSII). PSII is a light-driven water:plastoquinone oxidoreductase that uses light energy to abstract electrons from H(2)O, generating O(2) and a proton gradient subsequently used for ATP formation. It consists of a core antenna complex that captures photons, and an electron transfer chain that converts photonic excitation into a charge separation. This Physcomitrium patens (Spreading-leaved earth moss) protein is Cytochrome b559 subunit alpha.